The sequence spans 318 residues: uncharacterized protein (318 aa).

The protein belongs to the glycosyltransferase 2 family.

This is an uncharacterized protein from Rickettsia typhi (strain ATCC VR-144 / Wilmington).